An 86-amino-acid polypeptide reads, in one-letter code: Toxin Td1 (86 aa).

The signal sequence occupies residues 1 to 20; it reads MIRFILFISCFFLIGMVIEC. An LCN-type CS-alpha/beta domain is found at 21–83; it reads KDGYLMEPNG…VWERATNRCG (63 aa). 4 disulfides stabilise this stretch: cysteine 31–cysteine 82, cysteine 35–cysteine 57, cysteine 43–cysteine 63, and cysteine 47–cysteine 65. Lysine 84 carries the lysine amide modification.

Expressed by the venom gland.

It localises to the secreted. Its function is as follows. Beta toxins bind voltage-independently at site-4 of sodium channels (Nav) and shift the voltage of activation toward more negative potentials thereby affecting sodium channel activation and promoting spontaneous and repetitive firing. This Tityus discrepans (Venezuelan scorpion) protein is Toxin Td1.